The primary structure comprises 265 residues: Transmembrane protein 270 (265 aa).

3 consecutive transmembrane segments (helical) span residues 72-92, 130-150, and 185-205; these read PLGQ…WLVL, LFLS…VVTW, and LYWW…YLIT. Residues 229–265 are disordered; sequence QEVEPQEVSGSSLLPSLSASSDSESGTVLPEQETPRE. Low complexity predominate over residues 237-253; sequence SGSSLLPSLSASSDSES.

The protein localises to the membrane. This Homo sapiens (Human) protein is Transmembrane protein 270.